Reading from the N-terminus, the 178-residue chain is Anthranilate synthase component 2 (178 aa).

The region spanning 1 to 178 (MIVVVDCKDS…RNFVEMCHDG (178 aa)) is the Glutamine amidotransferase type-1 domain. 49–51 (GPG) contacts L-glutamine. C71 acts as the Nucleophile; for GATase activity in catalysis. L-glutamine-binding positions include Q75 and 120 to 121 (SL). Active-site for GATase activity residues include H155 and E157.

In terms of assembly, heterotetramer consisting of two non-identical subunits: a beta subunit (TrpG) and a large alpha subunit (TrpE).

It catalyses the reaction chorismate + L-glutamine = anthranilate + pyruvate + L-glutamate + H(+). It participates in amino-acid biosynthesis; L-tryptophan biosynthesis; L-tryptophan from chorismate: step 1/5. Part of a heterotetrameric complex that catalyzes the two-step biosynthesis of anthranilate, an intermediate in the biosynthesis of L-tryptophan. In the first step, the glutamine-binding beta subunit (TrpG) of anthranilate synthase (AS) provides the glutamine amidotransferase activity which generates ammonia as a substrate that, along with chorismate, is used in the second step, catalyzed by the large alpha subunit of AS (TrpE) to produce anthranilate. In the absence of TrpG, TrpE can synthesize anthranilate directly from chorismate and high concentrations of ammonia. This is Anthranilate synthase component 2 (trpG) from Archaeoglobus fulgidus (strain ATCC 49558 / DSM 4304 / JCM 9628 / NBRC 100126 / VC-16).